The following is a 128-amino-acid chain: Large ribosomal subunit protein eL22 (128 aa).

Thr62 carries the post-translational modification Phosphothreonine. The residue at position 66 (Ser66) is a Phosphoserine. Lys69 carries the N6-succinyllysine modification.

Belongs to the eukaryotic ribosomal protein eL22 family. As to quaternary structure, component of the large ribosomal subunit.

It is found in the cytoplasm. Functionally, component of the large ribosomal subunit. The ribosome is a large ribonucleoprotein complex responsible for the synthesis of proteins in the cell. This Rattus norvegicus (Rat) protein is Large ribosomal subunit protein eL22 (Rpl22).